Here is a 166-residue protein sequence, read N- to C-terminus: 6,7-dimethyl-8-ribityllumazine synthase (166 aa).

5-amino-6-(D-ribitylamino)uracil contacts are provided by residues W31, 63 to 65, and 85 to 87; these read SFE and VII. 90–91 provides a ligand contact to (2S)-2-hydroxy-3-oxobutyl phosphate; it reads GT. The active-site Proton donor is the H93. Residue F118 participates in 5-amino-6-(D-ribitylamino)uracil binding. R132 provides a ligand contact to (2S)-2-hydroxy-3-oxobutyl phosphate.

The protein belongs to the DMRL synthase family.

The enzyme catalyses (2S)-2-hydroxy-3-oxobutyl phosphate + 5-amino-6-(D-ribitylamino)uracil = 6,7-dimethyl-8-(1-D-ribityl)lumazine + phosphate + 2 H2O + H(+). It functions in the pathway cofactor biosynthesis; riboflavin biosynthesis; riboflavin from 2-hydroxy-3-oxobutyl phosphate and 5-amino-6-(D-ribitylamino)uracil: step 1/2. Functionally, catalyzes the formation of 6,7-dimethyl-8-ribityllumazine by condensation of 5-amino-6-(D-ribitylamino)uracil with 3,4-dihydroxy-2-butanone 4-phosphate. This is the penultimate step in the biosynthesis of riboflavin. The polypeptide is 6,7-dimethyl-8-ribityllumazine synthase (Cutibacterium acnes (strain DSM 16379 / KPA171202) (Propionibacterium acnes)).